Reading from the N-terminus, the 98-residue chain is NADH-ubiquinone oxidoreductase chain 4L (98 aa).

Helical transmembrane passes span 1–21 (MLPI…GVLI), 29–49 (TLLC…LMIT), and 59–79 (IPLI…ALLV).

Belongs to the complex I subunit 4L family. As to quaternary structure, core subunit of respiratory chain NADH dehydrogenase (Complex I) which is composed of 45 different subunits.

The protein resides in the mitochondrion inner membrane. The catalysed reaction is a ubiquinone + NADH + 5 H(+)(in) = a ubiquinol + NAD(+) + 4 H(+)(out). Functionally, core subunit of the mitochondrial membrane respiratory chain NADH dehydrogenase (Complex I) which catalyzes electron transfer from NADH through the respiratory chain, using ubiquinone as an electron acceptor. Part of the enzyme membrane arm which is embedded in the lipid bilayer and involved in proton translocation. The protein is NADH-ubiquinone oxidoreductase chain 4L (MT-ND4L) of Phascogale tapoatafa (Common wambenger).